The sequence spans 376 residues: Actin-like protein 53D (376 aa).

A necessary and sufficient for recruitment to the fusome and actin cones of spermatocyte cysts region spans residues 1–40; it reads MSSEVDSNSHHAAVVIDNGSGVCKAGFSPEDTPRAVFPSI.

It belongs to the actin family. ARP1 subfamily. In terms of tissue distribution, high expression in males whereas expression in females is very low. In adult males, highest levels of expression are in the testis. In adult females, expressed only in the ovaries at very low levels. In larvae, highly expressed in the imaginal disk whereas in prepupae and pupae modest levels of expression occur in the fat body.

The protein resides in the cytoplasm. Its subcellular location is the cytoskeleton. In terms of biological role, required for optimal embryo development, particularly under heat stress conditions. Also appears to have a role in negatively regulating spermatocyte cyst development. Under heat stress conditions, required for the correct organization and migration of nuclei during early embryogenesis, and therefore possibly functions by regulating embryonic actin networks during the heat stress response. This chain is Actin-like protein 53D, found in Drosophila melanogaster (Fruit fly).